The sequence spans 83 residues: MWFKIQVLVLAITLITLGIQAEPNSSPNNPLIVEEDRAECAAVYERCGKGYKRCCEERPCKCNIVMDNCTCKKFISELFGFGK.

Residues 1-21 (MWFKIQVLVLAITLITLGIQA) form the signal peptide. A propeptide spanning residues 22–37 (EPNSSPNNPLIVEEDR) is cleaved from the precursor. 4 cysteine pairs are disulfide-bonded: cysteine 40/cysteine 55, cysteine 47/cysteine 60, cysteine 54/cysteine 71, and cysteine 62/cysteine 69. The propeptide occupies 78–83 (LFGFGK).

The protein belongs to the neurotoxin 02 (plectoxin) family. In terms of tissue distribution, expressed by the venom gland.

The protein resides in the secreted. In terms of biological role, antagonist of L-type calcium channels (Cav1/CACNA1). In GH3 neuroendocrinal cell line, it reversibly inhibits the A-type potassium current but does not block other potassium currents or calcium channels. Shows an important acetylcholine-mediated antiarrhythmogenic effect in isolated hearts. In vivo, causes paralysis in the posterior limbs and gradual decreases in movement and aggression during 24 hours at dose levels of 5 ug per mouse. This Phoneutria nigriventer (Brazilian armed spider) protein is Kappa-ctenitoxin-Pn1a.